Here is an 83-residue protein sequence, read N- to C-terminus: DNA-directed RNA polymerase subunit Rpo5 (83 aa).

The protein belongs to the archaeal Rpo5/eukaryotic RPB5 RNA polymerase subunit family. Part of the RNA polymerase complex.

The protein localises to the cytoplasm. The enzyme catalyses RNA(n) + a ribonucleoside 5'-triphosphate = RNA(n+1) + diphosphate. Its function is as follows. DNA-dependent RNA polymerase (RNAP) catalyzes the transcription of DNA into RNA using the four ribonucleoside triphosphates as substrates. In Nitrosopumilus maritimus (strain SCM1), this protein is DNA-directed RNA polymerase subunit Rpo5.